A 490-amino-acid polypeptide reads, in one-letter code: Coagulation factor X (490 aa).

Positions 1–20 (MANPLHLVLLGAALAGLLLS) are cleaved as a signal peptide. The propeptide occupies 21–40 (GSSVFISRRAANDVLARTRR). In terms of domain architecture, Gla spans 41-85 (ANSFLEELKKGNLERECMEENCSYEEALEVFEDREKTNEFWNKYV). Residues Glu-46, Glu-47, Glu-54, Glu-56, Glu-59, and Glu-60 each carry the 4-carboxyglutamate modification. Cys-57 and Cys-62 are joined by a disulfide. A glycan (N-linked (GlcNAc...) asparagine) is linked at Asn-61. Residues Glu-65, Glu-66, Glu-69, Glu-72, Glu-75, and Glu-79 each carry the 4-carboxyglutamate modification. Positions 86–122 (DGDQCESNPCQNQGTCKDGLGMYTCSCVEGYEGQDCE) constitute an EGF-like 1; calcium-binding domain. 11 disulfides stabilise this stretch: Cys-90/Cys-101, Cys-95/Cys-110, Cys-112/Cys-121, Cys-129/Cys-140, Cys-136/Cys-149, Cys-151/Cys-164, Cys-172/Cys-340, Cys-239/Cys-244, Cys-259/Cys-275, Cys-388/Cys-402, and Cys-413/Cys-441. Asp-103 bears the (3R)-3-hydroxyaspartate mark. An EGF-like 2 domain is found at 125 to 165 (TRKLCSLDNGGCDQFCKEEENSVLCSCASGYTLGDNGKSCI). The disordered stretch occupies residues 183–230 (SPATNSSEGPPEAPGPEQQDDGNLTATENPFNLLDSPEPPPEDDSSSL). Positions 184–232 (PATNSSEGPPEAPGPEQQDDGNLTATENPFNLLDSPEPPPEDDSSSLVR) are cleaved as a propeptide — activation peptide. Residues Asn-187 and Asn-205 are each glycosylated (N-linked (GlcNAc...) asparagine). Over residues 203–212 (DGNLTATENP) the composition is skewed to polar residues. Residues 233–465 (IVGGQDCRDG…FLKWIEKSMR (233 aa)) form the Peptidase S1 domain. Active-site charge relay system residues include His-274 and Asp-320. Ser-417 serves as the catalytic Charge relay system.

Belongs to the peptidase S1 family. In terms of assembly, the two chains are formed from a single-chain precursor by the excision of two Arg residues and are held together by 1 or more disulfide bonds. Forms a heterodimer with SERPINA5. The vitamin K-dependent, enzymatic carboxylation of some glutamate residues allows the modified protein to bind calcium. In terms of processing, N- and O-glycosylated. Post-translationally, proteolytically cleaved and activated by cathepsin CTSG. The activation peptide is cleaved by factor IXa (in the intrinsic pathway), or by factor VIIa (in the extrinsic pathway). The iron and 2-oxoglutarate dependent 3-hydroxylation of aspartate and asparagine is (R) stereospecific within EGF domains.

It is found in the secreted. It carries out the reaction Selective cleavage of Arg-|-Thr and then Arg-|-Ile bonds in prothrombin to form thrombin.. Inhibited by SERPINA5. Its function is as follows. Factor Xa is a vitamin K-dependent glycoprotein that converts prothrombin to thrombin in the presence of factor Va, calcium and phospholipid during blood clotting. Factor Xa activates pro-inflammatory signaling pathways in a protease-activated receptor (PAR)-dependent manner. This is Coagulation factor X (F10) from Oryctolagus cuniculus (Rabbit).